Here is a 193-residue protein sequence, read N- to C-terminus: Adenine phosphoribosyltransferase (193 aa).

This sequence belongs to the purine/pyrimidine phosphoribosyltransferase family. In terms of assembly, homodimer.

The protein resides in the cytoplasm. The catalysed reaction is AMP + diphosphate = 5-phospho-alpha-D-ribose 1-diphosphate + adenine. The protein operates within purine metabolism; AMP biosynthesis via salvage pathway; AMP from adenine: step 1/1. Its function is as follows. Catalyzes a salvage reaction resulting in the formation of AMP, that is energically less costly than de novo synthesis. This is Adenine phosphoribosyltransferase from Bifidobacterium longum (strain NCC 2705).